A 159-amino-acid chain; its full sequence is RNA pyrophosphohydrolase (159 aa).

The 144-residue stretch at 6-149 (GFRPNVGIIL…KREVYRRALK (144 aa)) folds into the Nudix hydrolase domain. Residues 38 to 59 (GGINPDETPEDALYRELNEEVG) carry the Nudix box motif.

The protein belongs to the Nudix hydrolase family. RppH subfamily. A divalent metal cation serves as cofactor.

In terms of biological role, accelerates the degradation of transcripts by removing pyrophosphate from the 5'-end of triphosphorylated RNA, leading to a more labile monophosphorylated state that can stimulate subsequent ribonuclease cleavage. This chain is RNA pyrophosphohydrolase, found in Pseudomonas entomophila (strain L48).